The primary structure comprises 574 residues: Transmembrane protein 108 (574 aa).

A helical membrane pass occupies residues 9–29 (YCQLLSFLLTLALTKALVLAV). The interaction with SH3GL2 stretch occupies residues 31–169 (EPSPRESLQT…ATTRRPPRPP (139 aa)). Disordered regions lie at residues 32–352 (PSPR…SGVF) and 364–417 (DATV…PRPL). Positions 58–86 (TRLSSVLTLNPTPDGPSSQAAATLETTVS) are enriched in polar residues. A compositionally biased stretch (low complexity) spans 132–160 (LPPGDATPTTTLPTKPAGTTSRPTVAPRA). An interaction with DST (isoform 1) region spans residues 173 to 406 (RKGAGGSTRT…SPAEEEAEAS (234 aa)). The segment covering 245–271 (FSSTQPQTVSPATAPRSTSRVPPTTSL) has biased composition (polar residues). Over residues 292–312 (TSPGGEPAATAATGAPASTQP) the composition is skewed to low complexity. The span at 316–332 (PSQSPHGDVQDSASHSD) shows a compositional bias: polar residues. Residues 468-488 (IAWVIVAISVPISSCSVLLTV) form a helical membrane-spanning segment. The interaction with CYFIP2 stretch occupies residues 489 to 574 (CCMRRKKKTA…FVGNDQVSEI (86 aa)).

Interacts with DST (isoform 1). Interacts with SH3GL2. Interacts (via N-terminus) with CYFIP1 and CYFIP2; the interactions associate TMEM108 with the WAVE1 complex. Glycosylated. As to expression, expressed in the nervous system tissues, such as hippocampus and spinal cord, is barely detectable in peripheral tissues such as heart, lung, liver, kidney and muscle. In brain, highly expressed in dentate gyrus neurons and expressed in cortex, olfactory bulb, ammon's horn, cerebellum, hypothalamus and striatum.

It is found in the membrane. The protein localises to the postsynaptic density. It localises to the endosome membrane. The protein resides in the cell projection. Its subcellular location is the axon. It is found in the dendrite. The protein localises to the early endosome. Functionally, transmembrane protein required for proper cognitive functions. Involved in the development of dentate gyrus (DG) neuron circuitry, is necessary for AMPA receptors surface expression and proper excitatory postsynaptic currents of DG granule neurons. Regulates the organization and stability of the microtubule network of sensory neurons to allow axonal transport. Through the interaction with DST, mediates the docking of the dynein/dynactin motor complex to vesicle cargos for retrograde axonal transport. In hippocampal neurons, required for BDNF-dependent dendrite outgrowth. Cooperates with SH3GL2 and recruits the WAVE1 complex to facilitate actin-dependent BDNF:NTRK2 early endocytic trafficking and mediate signaling from early endosomes. The protein is Transmembrane protein 108 of Mus musculus (Mouse).